The primary structure comprises 330 residues: NADH-quinone oxidoreductase subunit H (330 aa).

8 helical membrane-spanning segments follow: residues 5–25 (LLTL…VLTL), 78–98 (WVFM…FAVI), 120–140 (IGLL…ALGG), 155–175 (AMAQ…PVVM), 191–211 (SLPN…AIMA), 243–263 (FFVG…VLFL), 271–291 (LPGI…FIWV), and 308–328 (WKIL…WLIW).

The protein belongs to the complex I subunit 1 family. In terms of assembly, NDH-1 is composed of 14 different subunits. Subunits NuoA, H, J, K, L, M, N constitute the membrane sector of the complex.

It is found in the cell inner membrane. It catalyses the reaction a quinone + NADH + 5 H(+)(in) = a quinol + NAD(+) + 4 H(+)(out). NDH-1 shuttles electrons from NADH, via FMN and iron-sulfur (Fe-S) centers, to quinones in the respiratory chain. The immediate electron acceptor for the enzyme in this species is believed to be ubiquinone. Couples the redox reaction to proton translocation (for every two electrons transferred, four hydrogen ions are translocated across the cytoplasmic membrane), and thus conserves the redox energy in a proton gradient. This subunit may bind ubiquinone. In Syntrophotalea carbinolica (strain DSM 2380 / NBRC 103641 / GraBd1) (Pelobacter carbinolicus), this protein is NADH-quinone oxidoreductase subunit H.